A 130-amino-acid polypeptide reads, in one-letter code: Type VII secretion system extracellular protein C (130 aa).

Belongs to the EsxC family. In terms of assembly, forms both homodimers and heterodimers with EsxA. Homodimerization is calcium-dependent.

The protein resides in the secreted. In Staphylococcus aureus (strain USA300), this protein is Type VII secretion system extracellular protein C.